The primary structure comprises 1474 residues: Alpha-2-macroglobulin-P (1474 aa).

An N-terminal signal peptide occupies residues 1 to 32; that stretch reads MGKRWLPSLALLPLPPPLLLLLLLLLPTNASA. Cysteines 55 and 93 form a disulfide. Residues N62, N77, and N253 are each glycosylated (N-linked (GlcNAc...) asparagine). Cystine bridges form between C257/C305 and C275/C293. An N-linked (GlcNAc...) asparagine glycan is attached at N402. Disulfide bonds link C476-C569, C601-C771, and C650-C697. Residues 623–752 are bait region; that stretch reads LVYDLLPVKD…LVIVDSTGVA (130 aa). 2 N-linked (GlcNAc...) asparagine glycosylation sites follow: N654 and N774. Cystine bridges form between C821–C849, C847–C883, C921–C1321, C1079–C1127, and C1352–C1467. N869 is a glycosylation site (N-linked (GlcNAc...) asparagine). Residues 972–975 constitute a cross-link (isoglutamyl cysteine thioester (Cys-Gln)); the sequence is CGEQ. N991 carries N-linked (GlcNAc...) asparagine glycosylation. N1366 carries N-linked (GlcNAc...) asparagine glycosylation.

It belongs to the protease inhibitor I39 (alpha-2-macroglobulin) family. In terms of assembly, homotetramer; disulfide-linked. In terms of tissue distribution, expressed in uterus, mesometrial lymphoid aggregate and mammary tissue during pregnancy. Expressed in ovary, testis and kidney. Low level expression in heart. Not expressed in liver.

It localises to the secreted. Its function is as follows. Is able to inhibit all four classes of proteinases by a unique 'trapping' mechanism. This protein has a peptide stretch, called the 'bait region' which contains specific cleavage sites for different proteinases. When a proteinase cleaves the bait region, a conformational change is induced in the protein which traps the proteinase. The entrapped enzyme remains active against low molecular weight substrates (activity against high molecular weight substrates is greatly reduced). Following cleavage in the bait region a thioester bond is hydrolyzed and mediates the covalent binding of the protein to the proteinase. The polypeptide is Alpha-2-macroglobulin-P (Mus musculus (Mouse)).